A 447-amino-acid chain; its full sequence is Adenylosuccinate synthetase (447 aa).

GTP-binding positions include 12 to 18 (GDEGKGK) and 40 to 42 (GHT). The Proton acceptor role is filled by aspartate 13. Mg(2+) contacts are provided by aspartate 13 and glycine 40. IMP contacts are provided by residues 13–16 (DEGK), 38–41 (NAGH), threonine 128, arginine 142, glutamine 223, threonine 238, and arginine 302. The active-site Proton donor is the histidine 41. A substrate-binding site is contributed by 298–304 (TTTGRKR). Residues arginine 304, 330 to 332 (KLD), and 412 to 414 (SLG) each bind GTP.

The protein belongs to the adenylosuccinate synthetase family. As to quaternary structure, homodimer. Mg(2+) is required as a cofactor.

It is found in the cytoplasm. It carries out the reaction IMP + L-aspartate + GTP = N(6)-(1,2-dicarboxyethyl)-AMP + GDP + phosphate + 2 H(+). Its pathway is purine metabolism; AMP biosynthesis via de novo pathway; AMP from IMP: step 1/2. Plays an important role in the de novo pathway of purine nucleotide biosynthesis. Catalyzes the first committed step in the biosynthesis of AMP from IMP. The protein is Adenylosuccinate synthetase of Trichormus variabilis (strain ATCC 29413 / PCC 7937) (Anabaena variabilis).